Consider the following 448-residue polypeptide: Phosphohexose mutases (448 aa).

Ser97 serves as the catalytic Phosphoserine intermediate. Residues Ser97, Asp237, Asp239, and Asp241 each coordinate Mg(2+).

The protein belongs to the phosphohexose mutase family. Requires Mg(2+) as cofactor.

The catalysed reaction is alpha-D-glucose 1-phosphate = alpha-D-glucose 6-phosphate. It carries out the reaction alpha-D-mannose 1-phosphate = D-mannose 6-phosphate. It participates in nucleotide-sugar biosynthesis; GDP-alpha-D-mannose biosynthesis; alpha-D-mannose 1-phosphate from D-fructose 6-phosphate: step 2/2. Involved in xanthan production. In Xanthomonas campestris pv. campestris (strain ATCC 33913 / DSM 3586 / NCPPB 528 / LMG 568 / P 25), this protein is Phosphohexose mutases (xanA).